The primary structure comprises 394 residues: NAD(P)H-quinone oxidoreductase subunit H (394 aa).

The protein belongs to the complex I 49 kDa subunit family. NDH-1 can be composed of about 15 different subunits; different subcomplexes with different compositions have been identified which probably have different functions.

It is found in the cellular thylakoid membrane. It carries out the reaction a plastoquinone + NADH + (n+1) H(+)(in) = a plastoquinol + NAD(+) + n H(+)(out). It catalyses the reaction a plastoquinone + NADPH + (n+1) H(+)(in) = a plastoquinol + NADP(+) + n H(+)(out). Its function is as follows. NDH-1 shuttles electrons from an unknown electron donor, via FMN and iron-sulfur (Fe-S) centers, to quinones in the respiratory and/or the photosynthetic chain. The immediate electron acceptor for the enzyme in this species is believed to be plastoquinone. Couples the redox reaction to proton translocation, and thus conserves the redox energy in a proton gradient. Cyanobacterial NDH-1 also plays a role in inorganic carbon-concentration. This chain is NAD(P)H-quinone oxidoreductase subunit H, found in Parasynechococcus marenigrum (strain WH8102).